Reading from the N-terminus, the 570-residue chain is Proline--tRNA ligase (570 aa).

It belongs to the class-II aminoacyl-tRNA synthetase family. ProS type 1 subfamily. In terms of assembly, homodimer.

The protein resides in the cytoplasm. It carries out the reaction tRNA(Pro) + L-proline + ATP = L-prolyl-tRNA(Pro) + AMP + diphosphate. Its function is as follows. Catalyzes the attachment of proline to tRNA(Pro) in a two-step reaction: proline is first activated by ATP to form Pro-AMP and then transferred to the acceptor end of tRNA(Pro). As ProRS can inadvertently accommodate and process non-cognate amino acids such as alanine and cysteine, to avoid such errors it has two additional distinct editing activities against alanine. One activity is designated as 'pretransfer' editing and involves the tRNA(Pro)-independent hydrolysis of activated Ala-AMP. The other activity is designated 'posttransfer' editing and involves deacylation of mischarged Ala-tRNA(Pro). The misacylated Cys-tRNA(Pro) is not edited by ProRS. This chain is Proline--tRNA ligase, found in Clostridium perfringens (strain SM101 / Type A).